A 57-amino-acid chain; its full sequence is Potassium channel toxin alpha-KTx 8.2 (57 aa).

The N-terminal stretch at 1 to 28 (MSRLYAIILIALVFNVVMTITPDMKVEA) is a signal peptide. 3 cysteine pairs are disulfide-bonded: C31–C47, C34–C52, and C38–C54.

This sequence belongs to the short scorpion toxin superfamily. Potassium channel inhibitor family. Alpha-KTx 08 subfamily. Expressed by the venom gland.

Its subcellular location is the secreted. Its function is as follows. This toxin inhibits rKv1.1/KCNA1 (100% inhibition at 3 uM), Kv1.3/KCNA3 (human, mouse and rat) (IC(50)=269-467 nM), shaker IR (60% at 3 uM) and activates the mouse capsaicin receptor TRPV1 (EC(50)=132 uM, at 20 degrees Celsius), a non-selective cation channel expressed by sensory neurons of the pain pathway. In vivo, intraplantar injection of this toxin in WT mice hind paw shows significant acute pain, whereas no pain is observed when the toxin is injected into TRPV1 KO mice. In addition, subcutaneous injection into mice (185 mg) produces an excitation of the animal, but no lethality, whereas injection into cockroaches does not provoke lethality as well. The chain is Potassium channel toxin alpha-KTx 8.2 from Olivierus martensii (Manchurian scorpion).